Consider the following 369-residue polypeptide: Phospho-N-acetylmuramoyl-pentapeptide-transferase (369 aa).

Helical transmembrane passes span 30–50, 73–93, 99–119, 140–160, 171–191, 202–222, 239–259, 266–286, 291–311, and 346–366; these read AAAI…IGYL, LPTM…LLWA, YVWL…IDDY, VSLG…SVLL, LMID…TAVS, GLAA…AYLT, GGEV…FLWF, IFMG…IALL, LLLP…SLQV, and KIVI…LMTL.

The protein belongs to the glycosyltransferase 4 family. MraY subfamily. It depends on Mg(2+) as a cofactor.

Its subcellular location is the cell inner membrane. It catalyses the reaction UDP-N-acetyl-alpha-D-muramoyl-L-alanyl-gamma-D-glutamyl-meso-2,6-diaminopimeloyl-D-alanyl-D-alanine + di-trans,octa-cis-undecaprenyl phosphate = di-trans,octa-cis-undecaprenyl diphospho-N-acetyl-alpha-D-muramoyl-L-alanyl-D-glutamyl-meso-2,6-diaminopimeloyl-D-alanyl-D-alanine + UMP. It participates in cell wall biogenesis; peptidoglycan biosynthesis. Functionally, catalyzes the initial step of the lipid cycle reactions in the biosynthesis of the cell wall peptidoglycan: transfers peptidoglycan precursor phospho-MurNAc-pentapeptide from UDP-MurNAc-pentapeptide onto the lipid carrier undecaprenyl phosphate, yielding undecaprenyl-pyrophosphoryl-MurNAc-pentapeptide, known as lipid I. The sequence is that of Phospho-N-acetylmuramoyl-pentapeptide-transferase from Chlorobium phaeobacteroides (strain BS1).